A 417-amino-acid polypeptide reads, in one-letter code: Phosphoglycerate kinase, cytosolic (417 aa).

Residues Val-23, Asp-24, Phe-25, Asn-26, Arg-39, Ser-61, His-62, Gly-64, Arg-65, Arg-132, His-168, and Arg-169 each contribute to the (2R)-3-phosphoglycerate site. Residues Gly-214 and Ala-215 each contribute to the ADP site. A CDP-binding site is contributed by Gly-214. Residues Ala-215 and Lys-216 each coordinate AMP. Ala-215 contacts ATP. Ala-215 is a binding site for Mg(2+). Lys-216 provides a ligand contact to (2R)-3-phosphoglycerate. Asp-219 provides a ligand contact to CDP. A Mg(2+)-binding site is contributed by Asp-219. ADP is bound by residues Lys-220 and Gly-238. Lys-220 is a binding site for AMP. Lys-220 serves as a coordination point for ATP. Gly-238 is a CDP binding site. Residues Ala-239 and Ala-311 each contribute to the AMP site. Ala-239 and Ala-311 together coordinate ATP. 2 residues coordinate ADP: Ala-311 and Asn-335. CDP-binding residues include Gly-336 and Phe-341. The ADP site is built by Phe-341, Glu-342, Asp-374, and Thr-375. An AMP-binding site is contributed by Glu-342. Residues Glu-342, Asp-374, and Thr-375 each coordinate ATP. Asp-374 serves as a coordination point for Mg(2+).

It belongs to the phosphoglycerate kinase family. Monomer. Mg(2+) serves as cofactor.

The protein localises to the cytoplasm. It catalyses the reaction (2R)-3-phosphoglycerate + ATP = (2R)-3-phospho-glyceroyl phosphate + ADP. It participates in carbohydrate degradation; glycolysis; pyruvate from D-glyceraldehyde 3-phosphate: step 2/5. This is Phosphoglycerate kinase, cytosolic (PGKB) from Leishmania mexicana.